The sequence spans 200 residues: NADH-quinone oxidoreductase subunit C (200 aa).

Belongs to the complex I 30 kDa subunit family. NDH-1 is composed of 14 different subunits. Subunits NuoB, C, D, E, F, and G constitute the peripheral sector of the complex.

The protein resides in the cell inner membrane. The catalysed reaction is a quinone + NADH + 5 H(+)(in) = a quinol + NAD(+) + 4 H(+)(out). NDH-1 shuttles electrons from NADH, via FMN and iron-sulfur (Fe-S) centers, to quinones in the respiratory chain. The immediate electron acceptor for the enzyme in this species is believed to be ubiquinone. Couples the redox reaction to proton translocation (for every two electrons transferred, four hydrogen ions are translocated across the cytoplasmic membrane), and thus conserves the redox energy in a proton gradient. The protein is NADH-quinone oxidoreductase subunit C of Burkholderia ambifaria (strain MC40-6).